A 291-amino-acid chain; its full sequence is Nucleotide-binding protein EUBREC_0697 (291 aa).

8–15 (GMSGAGKS) lines the ATP pocket. 59–62 (DVRN) provides a ligand contact to GTP.

It belongs to the RapZ-like family.

Its function is as follows. Displays ATPase and GTPase activities. The sequence is that of Nucleotide-binding protein EUBREC_0697 from Agathobacter rectalis (strain ATCC 33656 / DSM 3377 / JCM 17463 / KCTC 5835 / VPI 0990) (Eubacterium rectale).